The chain runs to 363 residues: Isopentenyl-diphosphate delta-isomerase (363 aa).

Substrate is bound at residue 6–7; it reads RK. Residues 64-66, Ser94, and Asn123 each bind FMN; that span reads AMT. Gln153 contributes to the substrate binding site. Mg(2+) is bound at residue Glu154. FMN contacts are provided by residues Lys185, Ser210, Thr215, 259-261, and 280-281; these read GVR and SA.

Belongs to the IPP isomerase type 2 family. As to quaternary structure, homooctamer. Dimer of tetramers. Mg(2+) serves as cofactor. FMN is required as a cofactor. It depends on NADPH as a cofactor.

The protein resides in the cytoplasm. It catalyses the reaction isopentenyl diphosphate = dimethylallyl diphosphate. In terms of biological role, involved in the biosynthesis of isoprenoids. Catalyzes the 1,3-allylic rearrangement of the homoallylic substrate isopentenyl (IPP) to its allylic isomer, dimethylallyl diphosphate (DMAPP). This chain is Isopentenyl-diphosphate delta-isomerase, found in Streptomyces sp. (strain CL190).